We begin with the raw amino-acid sequence, 48 residues long: uncharacterized protein (48 aa).

This is an uncharacterized protein from His1 virus (isolate Australia/Victoria) (His1V).